We begin with the raw amino-acid sequence, 21 residues long: Misgurin (21 aa).

The disordered stretch occupies residues 1 to 21 (RQRVEELSKFSKKGAAARRRK). Over residues 10 to 21 (FSKKGAAARRRK) the composition is skewed to basic residues.

It localises to the secreted. Strong antimicrobial activity against several Gram-positive and Gram-negative bacteria and fungi. This Misgurnus anguillicaudatus (Oriental weatherloach) protein is Misgurin.